Reading from the N-terminus, the 835-residue chain is Phosphatidylinositol 4-kinase beta (835 aa).

Disordered stretches follow at residues methionine 1–valine 61, serine 99–arginine 139, and proline 267–leucine 341. A compositionally biased stretch (low complexity) spans serine 19 to leucine 59. In terms of domain architecture, PIK helical spans leucine 59 to serine 262. Basic and acidic residues-rich tracts occupy residues isoleucine 125–lysine 134 and proline 267–valine 276. Residues proline 277 to histidine 288 are compositionally biased toward pro residues. Over residues aspartate 311–glutamate 332 the composition is skewed to polar residues. Residues glutamate 554–threonine 820 form the PI3K/PI4K catalytic domain. Residues valine 560–glycine 566 form a G-loop region. The segment at glutamine 687–asparagine 695 is catalytic loop. An activation loop region spans residues histidine 706 to threonine 730.

It belongs to the PI3/PI4-kinase family. Type III PI4K subfamily. Mg(2+) is required as a cofactor. The cofactor is Mn(2+). Expressed in the inner ear otic vesicles.

The protein resides in the endomembrane system. It localises to the mitochondrion outer membrane. The protein localises to the rough endoplasmic reticulum membrane. It carries out the reaction a 1,2-diacyl-sn-glycero-3-phospho-(1D-myo-inositol) + ATP = a 1,2-diacyl-sn-glycero-3-phospho-(1D-myo-inositol 4-phosphate) + ADP + H(+). Phosphorylates phosphatidylinositol (PI) in the first committed step in the production of the second messenger inositol-1,4,5,-trisphosphate (PIP). May play an important role the in inner ear development. The protein is Phosphatidylinositol 4-kinase beta (pi4kb) of Danio rerio (Zebrafish).